The primary structure comprises 431 residues: MTKSAELFAKAQDKIPGGVNSPVRAFAGVGGSPIFVERADGPLIFDADGKAYIDYVGSWGPMILGHNHAAIREAVISAAQRGLSFGAPTETEITMAELVSELVPSMEQVRMVSSGTEATMSAIRLARGYTGRDKIMKFEGCYHGHADSLLVKAGSGALTLGQPSSPGVPADFAKYTLTATFNDLDSVRELFAVNKGEIACIIVEPVAGNMNCIPPVEGFHEGLRQICDEEGALLIFDEVMTGFRVAENCAQGYYNIKPDLTTLGKVIGGGMPVGAFGGRKEVMQYIAPTGPVYQAGTLSGNPVAMAAGFACLKVLTEEGNEKRLADTTRHLANGFKELANKHGIPMVVNQVGGMFGFFFTDQETVTSYADVAKCDIERFKRFFHLMLKKGVYLAPSAFEASFTSLAHGPKEIEATLEAADQCFAIIASEAK.

Residue lysine 265 is modified to N6-(pyridoxal phosphate)lysine.

This sequence belongs to the class-III pyridoxal-phosphate-dependent aminotransferase family. HemL subfamily. As to quaternary structure, homodimer. Pyridoxal 5'-phosphate is required as a cofactor.

The protein localises to the cytoplasm. It catalyses the reaction (S)-4-amino-5-oxopentanoate = 5-aminolevulinate. The protein operates within porphyrin-containing compound metabolism; protoporphyrin-IX biosynthesis; 5-aminolevulinate from L-glutamyl-tRNA(Glu): step 2/2. The sequence is that of Glutamate-1-semialdehyde 2,1-aminomutase from Aliivibrio fischeri (strain ATCC 700601 / ES114) (Vibrio fischeri).